The sequence spans 363 residues: sn-glycerol-3-phosphate import ATP-binding protein UgpC (363 aa).

One can recognise an ABC transporter domain in the interval 4-235 (VVLRNVRKTY…PATTFVASFI (232 aa)). An ATP-binding site is contributed by 37 to 44 (GPSGCGKS).

This sequence belongs to the ABC transporter superfamily. sn-glycerol-3-phosphate importer (TC 3.A.1.1.3) family. The complex is composed of two ATP-binding proteins (UgpC), two transmembrane proteins (UgpA and UgpE) and a solute-binding protein (UgpB).

Its subcellular location is the cell inner membrane. The enzyme catalyses sn-glycerol 3-phosphate(out) + ATP + H2O = sn-glycerol 3-phosphate(in) + ADP + phosphate + H(+). Its function is as follows. Part of the ABC transporter complex UgpBAEC involved in sn-glycerol-3-phosphate (G3P) import. Responsible for energy coupling to the transport system. This chain is sn-glycerol-3-phosphate import ATP-binding protein UgpC, found in Rhodopseudomonas palustris (strain ATCC BAA-98 / CGA009).